Reading from the N-terminus, the 552-residue chain is Probable beta-glucosidase btgE (552 aa).

An N-terminal signal peptide occupies residues 1-18 (MRGAILATAAALAGTAMA). The segment at 250 to 291 (EPTSAPAAPSTTAVPATTTAAVPSTSSAAPSSSSTAPASTGA) is disordered. The span at 251-289 (PTSAPAAPSTTAVPATTTAAVPSTSSAAPSSSSTAPAST) shows a compositional bias: low complexity. Catalysis depends on glutamate 392, which acts as the Proton donor. The active-site Nucleophile is the glutamate 488.

It belongs to the glycosyl hydrolase 17 family.

It localises to the secreted. The protein localises to the cell wall. The catalysed reaction is Hydrolysis of terminal, non-reducing beta-D-glucosyl residues with release of beta-D-glucose.. It participates in glycan metabolism; cellulose degradation. Functionally, beta-glucosidases are one of a number of cellulolytic enzymes involved in the degradation of cellulosic biomass. Catalyzes the last step releasing glucose from the inhibitory cellobiose. This Neosartorya fischeri (strain ATCC 1020 / DSM 3700 / CBS 544.65 / FGSC A1164 / JCM 1740 / NRRL 181 / WB 181) (Aspergillus fischerianus) protein is Probable beta-glucosidase btgE (btgE).